The following is a 340-amino-acid chain: Ribonucleoside-diphosphate reductase small subunit (340 aa).

The Fe cation site is built by aspartate 94, glutamate 124, and histidine 127. Tyrosine 131 is a catalytic residue. A helical membrane pass occupies residues 180 to 200 (FILMILIEGIFFAASFAAIAY). 3 residues coordinate Fe cation: glutamate 187, glutamate 221, and histidine 224.

The protein belongs to the ribonucleoside diphosphate reductase small chain family. In terms of assembly, heterotetramer composed of a homodimer of the large subunit (R1) and a homodimer of the small subunit (R2). Larger multisubunit protein complex are also active, composed of (R1)n(R2)n. The cofactor is Fe cation.

It is found in the host membrane. It carries out the reaction a 2'-deoxyribonucleoside 5'-diphosphate + [thioredoxin]-disulfide + H2O = a ribonucleoside 5'-diphosphate + [thioredoxin]-dithiol. Functionally, ribonucleoside-diphosphate reductase holoenzyme provides the precursors necessary for viral DNA synthesis. Allows virus growth in non-dividing cells, as well as reactivation from latency in infected hosts. Catalyzes the biosynthesis of deoxyribonucleotides from the corresponding ribonucleotides. The polypeptide is Ribonucleoside-diphosphate reductase small subunit (Human herpesvirus 1 (strain KOS) (HHV-1)).